Here is a 677-residue protein sequence, read N- to C-terminus: Levanase (677 aa).

The N-terminal stretch at 1-24 (MKKRLIQVMIMFTLLLTMAFSADA) is a signal peptide. Residues 46 to 49 (WMND), Gln65, Trp73, 105 to 106 (FS), 171 to 172 (RD), Glu223, and Trp313 contribute to the substrate site. Asp49 is an active-site residue.

This sequence belongs to the glycosyl hydrolase 32 family.

The protein localises to the secreted. The enzyme catalyses Hydrolysis of terminal, non-reducing (2-&gt;1)- and (2-&gt;6)-linked beta-D-fructofuranose residues in fructans.. Is completely inhibited by Ag(+) and Hg(2+) ions. Its function is as follows. Exo-fructosidase that can hydrolyze both levan and inulin, leading to the production of free fructose. Is also able to hydrolyze sucrose and to a small extent raffinose, but not melezitose, stachylose, cellobiose, maltose, and lactose. The chain is Levanase (sacC) from Bacillus subtilis (strain 168).